Here is a 577-residue protein sequence, read N- to C-terminus: 2-succinyl-5-enolpyruvyl-6-hydroxy-3-cyclohexene-1-carboxylate synthase (577 aa).

Belongs to the TPP enzyme family. MenD subfamily. In terms of assembly, homodimer. Requires Mg(2+) as cofactor. It depends on Mn(2+) as a cofactor. Thiamine diphosphate is required as a cofactor.

The catalysed reaction is isochorismate + 2-oxoglutarate + H(+) = 5-enolpyruvoyl-6-hydroxy-2-succinyl-cyclohex-3-ene-1-carboxylate + CO2. The protein operates within quinol/quinone metabolism; 1,4-dihydroxy-2-naphthoate biosynthesis; 1,4-dihydroxy-2-naphthoate from chorismate: step 2/7. Its pathway is quinol/quinone metabolism; menaquinone biosynthesis. Functionally, catalyzes the thiamine diphosphate-dependent decarboxylation of 2-oxoglutarate and the subsequent addition of the resulting succinic semialdehyde-thiamine pyrophosphate anion to isochorismate to yield 2-succinyl-5-enolpyruvyl-6-hydroxy-3-cyclohexene-1-carboxylate (SEPHCHC). The polypeptide is 2-succinyl-5-enolpyruvyl-6-hydroxy-3-cyclohexene-1-carboxylate synthase (Geobacillus kaustophilus (strain HTA426)).